A 180-amino-acid chain; its full sequence is Putative peroxiredoxin YkuU (180 aa).

The region spanning 4–165 is the Thioredoxin domain; the sequence is RMVGKQAPRF…TLRVLQALQT (162 aa). Cysteine 52 functions as the Cysteine sulfenic acid (-SOH) intermediate in the catalytic mechanism.

Belongs to the peroxiredoxin family. AhpC/Prx1 subfamily. In terms of assembly, homodimer; disulfide-linked, upon oxidation.

Its subcellular location is the cytoplasm. It carries out the reaction a hydroperoxide + [protein]-dithiol = [protein]-disulfide + an alcohol + H2O. In terms of biological role, thiol-specific peroxidase that catalyzes the reduction of hydrogen peroxide and organic hydroperoxides to water and alcohols, respectively. Plays a role in cell protection against oxidative stress by detoxifying peroxides. This is Putative peroxiredoxin YkuU (ykuU) from Bacillus subtilis (strain 168).